The chain runs to 132 residues: Small ribosomal subunit protein uS8 (132 aa).

It belongs to the universal ribosomal protein uS8 family. Part of the 30S ribosomal subunit. Contacts proteins S5 and S12.

In terms of biological role, one of the primary rRNA binding proteins, it binds directly to 16S rRNA central domain where it helps coordinate assembly of the platform of the 30S subunit. The sequence is that of Small ribosomal subunit protein uS8 from Latilactobacillus sakei subsp. sakei (strain 23K) (Lactobacillus sakei subsp. sakei).